We begin with the raw amino-acid sequence, 210 residues long: UPF0301 protein OCAR_7326/OCA5_c07920 (210 aa).

It belongs to the UPF0301 (AlgH) family.

The sequence is that of UPF0301 protein OCAR_7326/OCA5_c07920 from Afipia carboxidovorans (strain ATCC 49405 / DSM 1227 / KCTC 32145 / OM5) (Oligotropha carboxidovorans).